The chain runs to 1829 residues: Afadin (1829 aa).

In terms of domain architecture, Ras-associating 1 spans phenylalanine 39–aspartate 133. The disordered stretch occupies residues lysine 129–serine 196. Positions glutamate 146–arginine 186 form a coiled coil. Residues threonine 160–arginine 172 are compositionally biased toward basic residues. Residues glutamate 173 to glutamine 189 are compositionally biased toward basic and acidic residues. Phosphoserine is present on residues serine 216, serine 246, and serine 256. The Ras-associating 2 domain occupies serine 246–proline 348. A compositionally biased stretch (basic and acidic residues) spans lysine 356–aspartate 371. Residues lysine 356–serine 377 are disordered. Phosphoserine occurs at positions 391 and 424. The 67-residue stretch at phenylalanine 441 to valine 507 folds into the FHA domain. 5 positions are modified to phosphoserine: serine 512, serine 557, serine 562, serine 589, and serine 655. Positions aspartate 539–alanine 595 are disordered. Residues isoleucine 576–threonine 591 show a composition bias toward basic and acidic residues. The Dilute domain maps to asparagine 668–asparagine 915. The region spanning valine 1014–glycine 1100 is the PDZ domain. 9 positions are modified to phosphoserine: serine 1090, serine 1114, serine 1133, serine 1147, serine 1150, serine 1179, serine 1180, serine 1189, and serine 1206. The disordered stretch occupies residues serine 1114 to threonine 1230. Residues isoleucine 1120 to glycine 1135 show a composition bias toward basic and acidic residues. The span at tyrosine 1139–serine 1150 shows a compositional bias: polar residues. Over residues serine 1159 to serine 1179 the composition is skewed to basic and acidic residues. Over residues proline 1195 to glutamine 1217 the composition is skewed to polar residues. 2 positions are modified to phosphothreonine: threonine 1218 and threonine 1239. Residues serine 1245 and serine 1282 each carry the phosphoserine modification. The span at glutamate 1300–serine 1309 shows a compositional bias: basic and acidic residues. 2 disordered regions span residues glutamate 1300–glutamine 1533 and arginine 1574–valine 1724. Over residues serine 1316–serine 1325 the composition is skewed to low complexity. The span at serine 1332–lysine 1344 shows a compositional bias: polar residues. Serine 1335 carries the post-translational modification Phosphoserine. The residue at position 1337 (threonine 1337) is a Phosphothreonine. Residues leucine 1371–alanine 1380 are compositionally biased toward pro residues. Low complexity predominate over residues asparagine 1401–alanine 1412. Residues alanine 1413–leucine 1447 show a composition bias toward basic and acidic residues. The stretch at lysine 1417–serine 1454 forms a coiled coil. Over residues methionine 1450–alanine 1464 the composition is skewed to polar residues. A compositionally biased stretch (basic and acidic residues) spans threonine 1494–leucine 1510. Residues serine 1506 and serine 1517 each carry the phosphoserine modification. A compositionally biased stretch (basic and acidic residues) spans proline 1520–glutamine 1533. The stretch at glutamate 1530 to lysine 1564 forms a coiled coil. Residues glutamate 1583–aspartate 1594 are compositionally biased toward acidic residues. The stretch at glutamine 1600 to glutamine 1672 forms a coiled coil. Residues leucine 1602–glutamate 1682 show a composition bias toward basic and acidic residues. A Phosphoserine modification is found at serine 1701. Polar residues predominate over residues arginine 1715–valine 1724. At serine 1726 the chain carries Phosphoserine. Residues aspartate 1742–lysine 1829 form a disordered region. Polar residues predominate over residues asparagine 1753–glycine 1764. Residues alanine 1768–aspartate 1781 are compositionally biased toward basic and acidic residues. Phosphoserine occurs at positions 1779 and 1804. Positions valine 1809–lysine 1829 are enriched in basic and acidic residues. Position 1812 is an N6-acetyllysine (lysine 1812).

In terms of assembly, homodimer. Interacts with F-actin, nectin and NECTIN3. Essential for the association of nectin and E-cadherin. Isoform 2/s-afadin does not interact with F-actin. Interacts with ZO-1 and occludin, but probably in an indirect manner. Interacts with RIT1, RIT2, NRXN1 and BCR. Interacts with ADAM10; the interaction locks ADAM10 at adherens junctions following ADAM10 recruitment to adherens junctions by TSPAN33. As to expression, isoform 1 is widely expressed, including in heart, brain, spleen, lung, liver, skeletal muscle, kidney and testis. Isoform 2 is mainly expressed in the brain.

It is found in the cell junction. Its subcellular location is the adherens junction. Functionally, belongs to an adhesion system, probably together with the E-cadherin-catenin system, which plays a role in the organization of homotypic, interneuronal and heterotypic cell-cell adherens junctions (AJs). Nectin- and actin-filament-binding protein that connects nectin to the actin cytoskeleton. May play a key role in the organization of epithelial structures of the embryonic ectoderm. Essential for the organization of adherens junctions. This is Afadin from Rattus norvegicus (Rat).